We begin with the raw amino-acid sequence, 349 residues long: Glycerol-3-phosphate dehydrogenase [NAD(P)+] (349 aa).

W20, R43, R44, and K117 together coordinate NADPH. Sn-glycerol 3-phosphate-binding residues include K117 and G147. A151 is a binding site for NADPH. Positions 202, 255, 265, 266, and 267 each coordinate sn-glycerol 3-phosphate. Residue K202 is the Proton acceptor of the active site. R266 is a binding site for NADPH. NADPH contacts are provided by V297 and E299.

The protein belongs to the NAD-dependent glycerol-3-phosphate dehydrogenase family.

It is found in the cytoplasm. It carries out the reaction sn-glycerol 3-phosphate + NAD(+) = dihydroxyacetone phosphate + NADH + H(+). It catalyses the reaction sn-glycerol 3-phosphate + NADP(+) = dihydroxyacetone phosphate + NADPH + H(+). It participates in membrane lipid metabolism; glycerophospholipid metabolism. Catalyzes the reduction of the glycolytic intermediate dihydroxyacetone phosphate (DHAP) to sn-glycerol 3-phosphate (G3P), the key precursor for phospholipid synthesis. In Mycobacterium leprae (strain TN), this protein is Glycerol-3-phosphate dehydrogenase [NAD(P)+].